Reading from the N-terminus, the 531-residue chain is Probable inactive beta-glucosidase 25 (531 aa).

The signal sequence occupies residues 1–24; the sequence is MALKAILFLGLFLVVIVSPITVYG. Residues Gln-53 and 202-203 each bind a beta-D-glucoside; that span reads NE. Glu-203 functions as the Proton donor in the catalytic mechanism. Cys-222 and Cys-230 are joined by a disulfide. Residues Phe-348 and 477 to 478 each bind a beta-D-glucoside; that span reads EW.

It belongs to the glycosyl hydrolase 1 family.

This is Probable inactive beta-glucosidase 25 from Arabidopsis thaliana (Mouse-ear cress).